Reading from the N-terminus, the 191-residue chain is Salivary lipocalin (191 aa).

Positions M1–S16 are cleaved as a signal peptide. N69 is a glycosylation site (N-linked (GlcNAc...) asparagine). An intrachain disulfide couples C84 to C176.

It belongs to the calycin superfamily. Lipocalin family. Homodimer. In terms of tissue distribution, in the submaxillary salivary glands of mature male pigs, but absent from that of females. Expression was much lower in submaxillary glands of castrated male pigs than in sexually mature individuals.

Its subcellular location is the secreted. Binds pheromones, the pheromones are released from the saliva of males and affect the sexual behavior of females. The sequence is that of Salivary lipocalin (SAL1) from Sus scrofa (Pig).